The following is a 363-amino-acid chain: MQTPTLGQLATENGAQVVGDPDLAIVGLAPLDQAGPGELSFLSNPLYLQQALDSQAGAVIVSAADLERVRAEGRADGRNWLVARNPYVCFARVAQRFDRAANTDTRTGIDPRATVAPDAVVPASCYIGPNVVIERGARLGERVRILANGYVGAQAEIGDDSLLYANVSVYHDCVVGARAILHSGVVIGADGFGFAPDIGATGVEYVKIPQTGRAVLGNDVEVGANTAIDRGAMADTVIEDGCKIDNQVQIAHNVRVGAHTVIAGCAAVSGSTRIGRFCVIGGAANFSGHLNIADRTTVSGGTSITKSITKPGGHFTSVFPFLPHGEWERNAAIVRGLTRLRERVVALERRLRGQAAGSQPSQD.

The Proton acceptor role is filled by His-252.

The protein belongs to the transferase hexapeptide repeat family. LpxD subfamily. In terms of assembly, homotrimer.

The catalysed reaction is a UDP-3-O-[(3R)-3-hydroxyacyl]-alpha-D-glucosamine + a (3R)-hydroxyacyl-[ACP] = a UDP-2-N,3-O-bis[(3R)-3-hydroxyacyl]-alpha-D-glucosamine + holo-[ACP] + H(+). It participates in bacterial outer membrane biogenesis; LPS lipid A biosynthesis. Catalyzes the N-acylation of UDP-3-O-acylglucosamine using 3-hydroxyacyl-ACP as the acyl donor. Is involved in the biosynthesis of lipid A, a phosphorylated glycolipid that anchors the lipopolysaccharide to the outer membrane of the cell. This chain is UDP-3-O-acylglucosamine N-acyltransferase, found in Cupriavidus necator (strain ATCC 17699 / DSM 428 / KCTC 22496 / NCIMB 10442 / H16 / Stanier 337) (Ralstonia eutropha).